Consider the following 175-residue polypeptide: MTIILGIDPGSRFTGYGVIKQEKQRFTYLGSGCIKAMSQGEDLASRLQTIFAGVSELIIQFKPDMFAIEQVFMGVNPGGALKLGQARGAAIVAATNSGLTIAEYSARQIKQAVVGTGAADKNQVQHMVKSILKLPGTPQADAADALAVALCHGHSHTSAAILAGQATKIVRGRLR.

Active-site residues include aspartate 8, glutamate 69, and aspartate 141. Residues aspartate 8, glutamate 69, and aspartate 141 each coordinate Mg(2+).

It belongs to the RuvC family. In terms of assembly, homodimer which binds Holliday junction (HJ) DNA. The HJ becomes 2-fold symmetrical on binding to RuvC with unstacked arms; it has a different conformation from HJ DNA in complex with RuvA. In the full resolvosome a probable DNA-RuvA(4)-RuvB(12)-RuvC(2) complex forms which resolves the HJ. Requires Mg(2+) as cofactor.

The protein localises to the cytoplasm. It carries out the reaction Endonucleolytic cleavage at a junction such as a reciprocal single-stranded crossover between two homologous DNA duplexes (Holliday junction).. In terms of biological role, the RuvA-RuvB-RuvC complex processes Holliday junction (HJ) DNA during genetic recombination and DNA repair. Endonuclease that resolves HJ intermediates. Cleaves cruciform DNA by making single-stranded nicks across the HJ at symmetrical positions within the homologous arms, yielding a 5'-phosphate and a 3'-hydroxyl group; requires a central core of homology in the junction. The consensus cleavage sequence is 5'-(A/T)TT(C/G)-3'. Cleavage occurs on the 3'-side of the TT dinucleotide at the point of strand exchange. HJ branch migration catalyzed by RuvA-RuvB allows RuvC to scan DNA until it finds its consensus sequence, where it cleaves and resolves the cruciform DNA. The sequence is that of Crossover junction endodeoxyribonuclease RuvC from Colwellia psychrerythraea (strain 34H / ATCC BAA-681) (Vibrio psychroerythus).